The chain runs to 263 residues: Small ribosomal subunit protein eS4 (263 aa).

Residues 42 to 104 (LPLIIFLRNR…TGENFRLIYD (63 aa)) enclose the S4 RNA-binding domain.

This sequence belongs to the eukaryotic ribosomal protein eS4 family.

The chain is Small ribosomal subunit protein eS4 (rps4) from Ictalurus punctatus (Channel catfish).